The following is an 801-amino-acid chain: Leucine--tRNA ligase (801 aa).

The 'HIGH' region signature appears at 40-51; that stretch reads PYPSGAGLHVGH. Positions 576-580 match the 'KMSKS' region motif; it reads KMSKS. Lysine 579 is a binding site for ATP.

It belongs to the class-I aminoacyl-tRNA synthetase family.

It is found in the cytoplasm. The enzyme catalyses tRNA(Leu) + L-leucine + ATP = L-leucyl-tRNA(Leu) + AMP + diphosphate. This Exiguobacterium sibiricum (strain DSM 17290 / CCUG 55495 / CIP 109462 / JCM 13490 / 255-15) protein is Leucine--tRNA ligase.